A 152-amino-acid chain; its full sequence is D-aminoacyl-tRNA deacylase (152 aa).

A Gly-cisPro motif, important for rejection of L-amino acids motif is present at residues Gly-142–Pro-143.

The protein belongs to the DTD family. In terms of assembly, homodimer.

It localises to the cytoplasm. The enzyme catalyses glycyl-tRNA(Ala) + H2O = tRNA(Ala) + glycine + H(+). The catalysed reaction is a D-aminoacyl-tRNA + H2O = a tRNA + a D-alpha-amino acid + H(+). An aminoacyl-tRNA editing enzyme that deacylates mischarged D-aminoacyl-tRNAs. Also deacylates mischarged glycyl-tRNA(Ala), protecting cells against glycine mischarging by AlaRS. Acts via tRNA-based rather than protein-based catalysis; rejects L-amino acids rather than detecting D-amino acids in the active site. By recycling D-aminoacyl-tRNA to D-amino acids and free tRNA molecules, this enzyme counteracts the toxicity associated with the formation of D-aminoacyl-tRNA entities in vivo and helps enforce protein L-homochirality. The chain is D-aminoacyl-tRNA deacylase from Burkholderia cenocepacia (strain HI2424).